A 128-amino-acid polypeptide reads, in one-letter code: Small ribosomal subunit protein eS8 (128 aa).

It belongs to the eukaryotic ribosomal protein eS8 family. Part of the 30S ribosomal subunit.

This is Small ribosomal subunit protein eS8 from Methanococcus maripaludis (strain C5 / ATCC BAA-1333).